We begin with the raw amino-acid sequence, 786 residues long: MRTYSCLQLVIWTCIFHMVDNSTLQGKDSSHFLRRIVNLKKDEGKMLHRAKRGWMWNQFFLLEEYTGTDTQYVGKLHTDQDKGDGNLKYILTGDGAGNLFVIDENTGDIHAAKRLDREEKSLYILRAKAIDRKTGRQVEPESEFIIKIHDINDNEPKFTKDLYTASVPEMSGVGTSVIQVTATDADDANYGNSAKVVYSILQGQPYFSVDPESGIIKTALPDMSRENKEQYQVVIQAKDMGGQMGGLSGTTTVNITLTDVNNNPPRFPQSTYQFNSLESAPLGTHLGRIKANDPDMGENAELEYSIAEGEGSDMFDVITDKDTQEGIITVKQNLDFEKKMLYTLRVDASNTHPDPRFLHLGPFKDSAMVKISVEDVDEPPVFSKLSYLMEVDEDVKEGSIIGQVTAYDPDAMNNIIKYSVDRHTDMDRVFSIHSENGSIFTLKPLDRESSPWHNITITATEINNPKQSSQIPVFIRILDINDHAPEFATYYETFVCENAKSGQLIQTISVMDKDDPPRGHKFFFEPVPEFPLNPNFTIVDNKDNTAGIVTRKDGYSRNKMNTYLLPVLIFDNDYPIQSSTGTLTIRVCACDNLGNMQSCNAEALMLAAGLSTGALIAILLCVVILLTLIVLFAALKRQRKKEPLIISKDDVRDNIVTYNDEGGGEEDTQAFDIGTLRNPEAREDSKLRRDVMPETIFQIRRTVPLWENIDVQDFIHRRLKENDSDPSAPPYDSLATYAYEGNDSVANSLSSLESLTADCNQDYDYLSDWGPRFKKLAEMYGGNDSD.

Residues 1 to 21 form the signal peptide; that stretch reads MRTYSCLQLVIWTCIFHMVDN. The N-linked (GlcNAc...) asparagine glycan is linked to asparagine 21. The propeptide occupies 22 to 52; that stretch reads STLQGKDSSHFLRRIVNLKKDEGKMLHRAKR. The Extracellular segment spans residues 22-614; it reads STLQGKDSSH…MLAAGLSTGA (593 aa). 5 consecutive Cadherin domains span residues 54 to 158, 159 to 267, 268 to 382, 383 to 487, and 487 to 604; these read WMWN…EPKF, TKDL…PPRF, PQST…PPVF, SKLS…APEF, and FATY…AEAL. N-linked (GlcNAc...) asparagine glycosylation is present at asparagine 254. 2 N-linked (GlcNAc...) asparagine glycosylation sites follow: asparagine 454 and asparagine 535. Residues 615–635 form a helical membrane-spanning segment; it reads LIAILLCVVILLTLIVLFAAL. The Cytoplasmic segment spans residues 636–786; it reads KRQRKKEPLI…AEMYGGNDSD (151 aa). Serine 785 carries the phosphoserine modification.

The protein localises to the cell membrane. Its function is as follows. Cadherins are calcium-dependent cell adhesion proteins. They preferentially interact with themselves in a homophilic manner in connecting cells; cadherins may thus contribute to the sorting of heterogeneous cell types. This chain is Cadherin-9 (Cdh9), found in Mus musculus (Mouse).